The following is a 168-amino-acid chain: Ribosome maturation factor RimM (168 aa).

In terms of domain architecture, PRC barrel spans 94 to 167; sequence DGNYYHHQII…KVIIELLDGL (74 aa).

It belongs to the RimM family. As to quaternary structure, binds ribosomal protein uS19.

The protein resides in the cytoplasm. Functionally, an accessory protein needed during the final step in the assembly of 30S ribosomal subunit, possibly for assembly of the head region. Essential for efficient processing of 16S rRNA. May be needed both before and after RbfA during the maturation of 16S rRNA. It has affinity for free ribosomal 30S subunits but not for 70S ribosomes. The polypeptide is Ribosome maturation factor RimM (Ligilactobacillus salivarius (strain UCC118) (Lactobacillus salivarius)).